A 2489-amino-acid polypeptide reads, in one-letter code: Protein YPR117W (2489 aa).

The next 2 helical transmembrane spans lie at 19–39 (FMLFIISIQKIASILMSWILM) and 128–148 (VLSILKLVFSFSTFFHTLALT). Residues N191, N210, N311, N452, N468, N605, N638, N663, N698, N789, N835, N981, N1255, N1404, and N1476 are each glycosylated (N-linked (GlcNAc...) asparagine). Residues 1610–1676 (LTQEKLATER…RLHTVNTILS (67 aa)) are a coiled coil. Residues 1685 to 1704 (PGGNTDGDSSSSLSDTDVNL) are disordered. The span at 1690-1704 (DGDSSSSLSDTDVNL) shows a compositional bias: low complexity. N-linked (GlcNAc...) asparagine glycans are attached at residues N1978 and N2189. A phosphoserine mark is found at S2254 and S2278. N-linked (GlcNAc...) asparagine glycosylation occurs at N2279. Positions 2451–2471 (SSTHSSDIRSINSDETYNEND) are enriched in polar residues. Residues 2451–2489 (SSTHSSDIRSINSDETYNENDGNGVKPFYPVTSEFSKNK) form a disordered region.

The protein resides in the cell membrane. Its subcellular location is the endoplasmic reticulum membrane. It is found in the mitochondrion membrane. Functionally, tube-forming lipid transport protein which may bind to phosphatidylinositols and may affect phosphatidylinositol-4,5-bisphosphate (PtdIns-4,5-P2) distribution. This Saccharomyces cerevisiae (strain ATCC 204508 / S288c) (Baker's yeast) protein is Protein YPR117W.